Here is a 160-residue protein sequence, read N- to C-terminus: uncharacterized protein (160 aa).

This is an uncharacterized protein from Mycobacterium tuberculosis (strain ATCC 25618 / H37Rv).